Here is a 251-residue protein sequence, read N- to C-terminus: Ubiquinone/menaquinone biosynthesis C-methyltransferase UbiE (251 aa).

S-adenosyl-L-methionine contacts are provided by residues Thr-74, Asp-95, and Asn-123 to Ala-124.

It belongs to the class I-like SAM-binding methyltransferase superfamily. MenG/UbiE family.

The catalysed reaction is a 2-demethylmenaquinol + S-adenosyl-L-methionine = a menaquinol + S-adenosyl-L-homocysteine + H(+). It carries out the reaction a 2-methoxy-6-(all-trans-polyprenyl)benzene-1,4-diol + S-adenosyl-L-methionine = a 5-methoxy-2-methyl-3-(all-trans-polyprenyl)benzene-1,4-diol + S-adenosyl-L-homocysteine + H(+). Its pathway is quinol/quinone metabolism; menaquinone biosynthesis; menaquinol from 1,4-dihydroxy-2-naphthoate: step 2/2. It participates in cofactor biosynthesis; ubiquinone biosynthesis. In terms of biological role, methyltransferase required for the conversion of demethylmenaquinol (DMKH2) to menaquinol (MKH2) and the conversion of 2-polyprenyl-6-methoxy-1,4-benzoquinol (DDMQH2) to 2-polyprenyl-3-methyl-6-methoxy-1,4-benzoquinol (DMQH2). In Shewanella baltica (strain OS223), this protein is Ubiquinone/menaquinone biosynthesis C-methyltransferase UbiE.